The chain runs to 353 residues: Quinolinate synthase (353 aa).

Positions 47 and 68 each coordinate iminosuccinate. Residue Cys-113 coordinates [4Fe-4S] cluster. Iminosuccinate-binding positions include 139–141 (YAN) and Ser-156. Cys-200 lines the [4Fe-4S] cluster pocket. Iminosuccinate contacts are provided by residues 226–228 (HPE) and Thr-243. Cys-297 provides a ligand contact to [4Fe-4S] cluster.

The protein belongs to the quinolinate synthase family. Type 1 subfamily. Requires [4Fe-4S] cluster as cofactor.

Its subcellular location is the cytoplasm. The catalysed reaction is iminosuccinate + dihydroxyacetone phosphate = quinolinate + phosphate + 2 H2O + H(+). Its pathway is cofactor biosynthesis; NAD(+) biosynthesis; quinolinate from iminoaspartate: step 1/1. Its function is as follows. Catalyzes the condensation of iminoaspartate with dihydroxyacetone phosphate to form quinolinate. In Vibrio vulnificus (strain YJ016), this protein is Quinolinate synthase.